The primary structure comprises 210 residues: Outer surface protein C (210 aa).

Positions 1 to 18 (MKKNTLSAILMTLFLFIS) are cleaved as a signal peptide. The N-palmitoyl cysteine moiety is linked to residue Cys19. A lipid anchor (S-diacylglycerol cysteine) is attached at Cys19.

It belongs to the OspC lipoprotein family. Homodimer. Binds human plasminogen on the bacterial surface, also binds human plasmin. Interacts with tick I.ricinus salivary protein Iric-1. Interacts with human complement C4 beta chain (C4B); whole bacteria bind to wells coated with C4b. Binding is inhibited by human complement factor C2.

The protein localises to the cell outer membrane. It is found in the cell surface. Functionally, a major immunodominant protein in mammalian hosts. Required for the initial stages of mammalian infection. Interaction with tick I.ricinus salivary protein Salp15 protects the bacteria from antibody-mediated killing in vitro and in vivo. Inhibits macrophage-mediated phagocytosis of the bacteria. Binds human plasminogen; this probably confers an extracellular protease activity on the bacteria that allows it to traverse tissue. Binds human complement C4-B, which may inhibit the complement cascade. Experiments in mice suggest it may play another role after initial infection. This Borreliella burgdorferi (strain ATCC 35210 / DSM 4680 / CIP 102532 / B31) (Borrelia burgdorferi) protein is Outer surface protein C.